The following is a 254-amino-acid chain: MIIVISPAKSQNFEPIKTAYQFTQPIFKQQIIKLINILKHYEVEEIEKLMKISPKLAEEVFAKHNSFNPNKYDNSNAKAAIFTFNGDVYKGLEADTLDNKTIEYAQNHLLMLSGLYGLVRPLDLIQAYRLEMGTNIKIDGKILHKYWQDKITTQLNEYFSQQQNKILINLASNEYSQAIDKKSLAVKWLDIDFKENKAGAYKTIGIHAKKARGLMTRYILENRIENVSDIKKFNVAGYQFNPDFSDENLLCFTR.

Belongs to the UPF0246 family.

The chain is UPF0246 protein FTW_0267 from Francisella tularensis subsp. tularensis (strain WY96-3418).